Consider the following 116-residue polypeptide: Small ribosomal subunit protein bS16 (116 aa).

It belongs to the bacterial ribosomal protein bS16 family.

This is Small ribosomal subunit protein bS16 from Chlamydia trachomatis serovar L2 (strain ATCC VR-902B / DSM 19102 / 434/Bu).